Consider the following 798-residue polypeptide: Acetyl-CoA decarbonylase/synthase complex subunit alpha 2 (798 aa).

[4Fe-4S] cluster contacts are provided by C65, C68, C69, C71, C76, and C86. CO is bound at residue H109. Residues H246, C274, and C313 each contribute to the [Ni-4Fe-4S] cluster site. 2 4Fe-4S ferredoxin-type domains span residues 395-424 (EEQFMEYARACTQCGNCTIACPQGIRIGEA) and 434-463 (SKLEKEWDVCIACGRCEQVCPKGIPIIDMY). Residues C405, C408, C411, C415, C443, C446, C449, and C453 each contribute to the [4Fe-4S] cluster site. [Ni-4Fe-4S] cluster-binding residues include C511, C540, and C575.

Belongs to the Ni-containing carbon monoxide dehydrogenase family. Heterotetramer of two alpha and two epsilon subunits. The ACDS complex is made up of alpha, epsilon, beta, gamma and delta subunits with a probable stoichiometry of (alpha(2)epsilon(2))(4)-beta(8)-(gamma(1)delta(1))(8). [4Fe-4S] cluster serves as cofactor. [Ni-4Fe-4S] cluster is required as a cofactor.

The catalysed reaction is CO + 2 oxidized [2Fe-2S]-[ferredoxin] + H2O = 2 reduced [2Fe-2S]-[ferredoxin] + CO2 + 2 H(+). Its function is as follows. Part of the ACDS complex that catalyzes the reversible cleavage of acetyl-CoA, allowing autotrophic growth from CO(2). The alpha-epsilon subcomponent functions as a carbon monoxide dehydrogenase. This chain is Acetyl-CoA decarbonylase/synthase complex subunit alpha 2, found in Archaeoglobus fulgidus (strain ATCC 49558 / DSM 4304 / JCM 9628 / NBRC 100126 / VC-16).